Consider the following 145-residue polypeptide: Putative BCoR-like protein 2 (145 aa).

Basic and acidic residues predominate over residues Met-1 to Asp-27. The tract at residues Met-1–Arg-58 is disordered. Polar residues predominate over residues Val-38–Ser-52.

It belongs to the BCOR family.

This Homo sapiens (Human) protein is Putative BCoR-like protein 2 (BCORP1).